The primary structure comprises 116 residues: Large ribosomal subunit protein bL17 (116 aa).

The protein belongs to the bacterial ribosomal protein bL17 family. Part of the 50S ribosomal subunit. Contacts proteins L3 and L32.

Its function is as follows. Binds to the 23S rRNA. The chain is Large ribosomal subunit protein bL17 from Deinococcus radiodurans (strain ATCC 13939 / DSM 20539 / JCM 16871 / CCUG 27074 / LMG 4051 / NBRC 15346 / NCIMB 9279 / VKM B-1422 / R1).